A 347-amino-acid chain; its full sequence is Ribosomal RNA small subunit methyltransferase C (347 aa).

The protein belongs to the methyltransferase superfamily. RsmC family. As to quaternary structure, monomer.

It localises to the cytoplasm. The enzyme catalyses guanosine(1207) in 16S rRNA + S-adenosyl-L-methionine = N(2)-methylguanosine(1207) in 16S rRNA + S-adenosyl-L-homocysteine + H(+). Functionally, specifically methylates the guanine in position 1207 of 16S rRNA in the 30S particle. The protein is Ribosomal RNA small subunit methyltransferase C of Yersinia pseudotuberculosis serotype O:1b (strain IP 31758).